The sequence spans 455 residues: UPF0210 protein Teth514_2074 (455 aa).

Belongs to the UPF0210 family. As to quaternary structure, homodimer.

This chain is UPF0210 protein Teth514_2074, found in Thermoanaerobacter sp. (strain X514).